The chain runs to 194 residues: dTTP/UTP pyrophosphatase (194 aa).

Asp69 (proton acceptor) is an active-site residue.

The protein belongs to the Maf family. YhdE subfamily. A divalent metal cation serves as cofactor.

Its subcellular location is the cytoplasm. The catalysed reaction is dTTP + H2O = dTMP + diphosphate + H(+). It carries out the reaction UTP + H2O = UMP + diphosphate + H(+). In terms of biological role, nucleoside triphosphate pyrophosphatase that hydrolyzes dTTP and UTP. May have a dual role in cell division arrest and in preventing the incorporation of modified nucleotides into cellular nucleic acids. This Moorella thermoacetica (strain ATCC 39073 / JCM 9320) protein is dTTP/UTP pyrophosphatase.